Consider the following 144-residue polypeptide: AP-4 complex subunit sigma-1 (144 aa).

The protein belongs to the adaptor complexes small subunit family. In terms of assembly, adaptor protein complex 4 (AP-4) is a heterotetramer composed of two large adaptins (epsilon-type subunit AP4E1 and beta-type subunit AP4B1), a medium adaptin (mu-type subunit AP4M1) and a small adaptin (sigma-type AP4S1).

Its subcellular location is the golgi apparatus. The protein localises to the trans-Golgi network membrane. Functionally, component of the adaptor protein complex 4 (AP-4). Adaptor protein complexes are vesicle coat components involved both in vesicle formation and cargo selection. They control the vesicular transport of proteins in different trafficking pathways. AP-4 forms a non clathrin-associated coat on vesicles departing the trans-Golgi network (TGN) and may be involved in the targeting of proteins from the trans-Golgi network (TGN) to the endosomal-lysosomal system. It is also involved in protein sorting to the basolateral membrane in epithelial cells and the proper asymmetric localization of somatodendritic proteins in neurons. AP-4 is involved in the recognition and binding of tyrosine-based sorting signals found in the cytoplasmic part of cargos, but may also recognize other types of sorting signal. The protein is AP-4 complex subunit sigma-1 of Mus musculus (Mouse).